A 377-amino-acid chain; its full sequence is Nitric oxide reductase FlRd-NAD(+) reductase (377 aa).

This sequence belongs to the FAD-dependent oxidoreductase family. The cofactor is FAD.

It localises to the cytoplasm. The catalysed reaction is 2 reduced [nitric oxide reductase rubredoxin domain] + NAD(+) + H(+) = 2 oxidized [nitric oxide reductase rubredoxin domain] + NADH. It participates in nitrogen metabolism; nitric oxide reduction. In terms of biological role, one of at least two accessory proteins for anaerobic nitric oxide (NO) reductase. Reduces the rubredoxin moiety of NO reductase. This is Nitric oxide reductase FlRd-NAD(+) reductase (norW) from Shigella boydii serotype 4 (strain Sb227).